The sequence spans 207 residues: Ras-related protein Rab-7a (207 aa).

An N-acetylthreonine modification is found at T2. The GTP site is built by S17, G18, V19, G20, K21, T22, S23, S34, N35, Y37, and T40. T22 serves as a coordination point for Mg(2+). A Switch 1 motif is present at residues 28–41 (YVNKKFSNQYKATI). Positions 40 and 63 each coordinate Mg(2+). G66 serves as a coordination point for GTP. Positions 67–82 (QERFQSLGVAFYRGAD) match the Switch 2 motif. The residue at position 72 (S72) is a Phosphoserine. GTP-binding residues include N125, K126, D128, A156, and K157. Residues K191 and K194 each participate in a glycyl lysine isopeptide (Lys-Gly) (interchain with G-Cter in ubiquitin) cross-link. Residues C205 and C207 are each lipidated (S-geranylgeranyl cysteine). C207 carries the cysteine methyl ester modification.

The protein belongs to the small GTPase superfamily. Rab family. Interacts with NTRK1/TRKA. Interacts with RILP. Interacts with PSMA7. Interacts with RNF115. Interacts with FYCO1. Interacts with the PIK3C3/VPS34-PIK3R4 complex. The GTP-bound form interacts with OSBPL1A. The GTP-bound form interacts with RAC1. Interacts with CLN3. Interacts with CHM, the substrate-binding subunit of the Rab geranylgeranyltransferase complex. Interacts with C9orf72. Does not interact with HPS4 and the BLOC-3 complex (heterodimer of HPS1 and HPS4). Interacts with CLN5. Interacts with PLEKHM1 (via N- and C-terminus). Interacts with PRPH; the interaction is direct. Interacts with VPS13A. The GDP-bound form interacts with RIMOC1. Interacts with the MON1A-CCZ1B complex and this interaction is enhanced in the presence of RIMOC1. Interacts with VPS39 and VPS41. Forms a ternary complex with LAMP2 and RUFY4; the interaction with LAMP2 is mediated by RUFY4 (via RUN and coiled coil domains). Mg(2+) is required as a cofactor. Deubiquitination at Lys-191 and Lys-194 by USP32. In terms of processing, phosphorylated at Ser-72 by LRRK1; phosphorylation is dependent on protein kinase C (PKC) activation of LRRK1. Post-translationally, prenylated. Prenylation is required for association with cellular membranes.

Its subcellular location is the cytoplasmic vesicle. It localises to the phagosome membrane. It is found in the late endosome membrane. The protein resides in the lysosome membrane. The protein localises to the melanosome membrane. Its subcellular location is the autophagosome membrane. It localises to the lipid droplet. It is found in the endosome membrane. The protein resides in the mitochondrion membrane. It carries out the reaction GTP + H2O = GDP + phosphate + H(+). Its activity is regulated as follows. Regulated by guanine nucleotide exchange factors (GEFs) which promote the exchange of bound GDP for free GTP. Regulated by GTPase activating proteins (GAPs) which increase the GTP hydrolysis activity. Inhibited by GDP dissociation inhibitors (GDIs). Functionally, the small GTPases Rab are key regulators of intracellular membrane trafficking, from the formation of transport vesicles to their fusion with membranes. Rabs cycle between an inactive GDP-bound form and an active GTP-bound form that is able to recruit to membranes different sets of downstream effectors directly responsible for vesicle formation, movement, tethering and fusion. In its active state, RAB7A binds to a variety of effector proteins playing a key role in the regulation of endo-lysosomal trafficking. Governs early-to-late endosomal maturation, microtubule minus-end as well as plus-end directed endosomal migration and positioning, and endosome-lysosome transport through different protein-protein interaction cascades. Also plays a central role in growth-factor-mediated cell signaling, nutrient-transporter-mediated nutrient uptake, neurotrophin transport in the axons of neurons and lipid metabolism. Also involved in regulation of some specialized endosomal membrane trafficking, such as maturation of melanosomes, pathogen-induced phagosomes (or vacuoles) and autophagosomes. Plays a role in the maturation and acidification of phagosomes that engulf pathogens, such as S.aureus and Mycobacteria. Plays a role in the fusion of phagosomes with lysosomes. In concert with RAC1, plays a role in regulating the formation of RBs (ruffled borders) in osteoclasts. Controls the endosomal trafficking and neurite outgrowth signaling of NTRK1/TRKA. Regulates the endocytic trafficking of the EGF-EGFR complex by regulating its lysosomal degradation. Involved in the ADRB2-stimulated lipolysis through lipophagy, a cytosolic lipase-independent autophagic pathway. Required for the exosomal release of SDCBP, CD63 and syndecan. Required for vesicular trafficking and cell surface expression of ACE2. May play a role in PRPH neuronal intermediate filament assembly. In Pongo abelii (Sumatran orangutan), this protein is Ras-related protein Rab-7a (RAB7A).